Reading from the N-terminus, the 196-residue chain is Endoribonuclease YbeY (196 aa).

3 residues coordinate Zn(2+): His120, His124, and His130.

Belongs to the endoribonuclease YbeY family. The cofactor is Zn(2+).

The protein localises to the cytoplasm. Its function is as follows. Single strand-specific metallo-endoribonuclease involved in late-stage 70S ribosome quality control and in maturation of the 3' terminus of the 16S rRNA. The protein is Endoribonuclease YbeY of Corynebacterium glutamicum (strain R).